The sequence spans 221 residues: Jacalin-related lectin 47 (221 aa).

2 consecutive Jacalin-type lectin domains span residues 1–64 (MDSN…YYYP) and 71–217 (SEKL…HVLP).

This sequence belongs to the jacalin lectin family.

The sequence is that of Jacalin-related lectin 47 (JAL47) from Arabidopsis thaliana (Mouse-ear cress).